The sequence spans 530 residues: Type II methyltransferase M.MjaII (530 aa).

It belongs to the N(4)/N(6)-methyltransferase family. N(4) subfamily.

The catalysed reaction is a 2'-deoxycytidine in DNA + S-adenosyl-L-methionine = an N(4)-methyl-2'-deoxycytidine in DNA + S-adenosyl-L-homocysteine + H(+). Functionally, an alpha subtype methylase that recognizes the double-stranded sequence 5'-GGNCC-3', methylates C-5 on both strands, and protects the DNA from cleavage by the MjaII endonuclease. The sequence is that of Type II methyltransferase M.MjaII (mjaIIM) from Methanocaldococcus jannaschii (strain ATCC 43067 / DSM 2661 / JAL-1 / JCM 10045 / NBRC 100440) (Methanococcus jannaschii).